We begin with the raw amino-acid sequence, 202 residues long: Small ribosomal subunit protein uS4c (202 aa).

The S4 RNA-binding domain maps to 90 to 150; it reads MRLDNVIFRL…NQRKSQAIIN (61 aa).

This sequence belongs to the universal ribosomal protein uS4 family. In terms of assembly, part of the 30S ribosomal subunit. Contacts protein S5. The interaction surface between S4 and S5 is involved in control of translational fidelity.

The protein localises to the plastid. It is found in the chloroplast. One of the primary rRNA binding proteins, it binds directly to 16S rRNA where it nucleates assembly of the body of the 30S subunit. Its function is as follows. With S5 and S12 plays an important role in translational accuracy. This Canalohypopterygium tamariscinum (Moss) protein is Small ribosomal subunit protein uS4c (rps4).